The sequence spans 462 residues: Fumarate hydratase class II (462 aa).

Substrate contacts are provided by residues serine 97–threonine 99, histidine 127–aspartate 130, serine 137–asparagine 139, and threonine 185. The Proton donor/acceptor role is filled by histidine 186. Residue serine 316 is part of the active site. Substrate is bound by residues serine 317 and lysine 322–asparagine 324.

This sequence belongs to the class-II fumarase/aspartase family. Fumarase subfamily. As to quaternary structure, homotetramer.

It is found in the cytoplasm. It carries out the reaction (S)-malate = fumarate + H2O. The protein operates within carbohydrate metabolism; tricarboxylic acid cycle; (S)-malate from fumarate: step 1/1. Functionally, involved in the TCA cycle. Catalyzes the stereospecific interconversion of fumarate to L-malate. This Bacillus anthracis protein is Fumarate hydratase class II.